Here is a 308-residue protein sequence, read N- to C-terminus: Beta-1,3-galactosyltransferase 5 (308 aa).

The Cytoplasmic portion of the chain corresponds to 1–7 (MAHMKTR). The helical; Signal-anchor for type II membrane protein transmembrane segment at 8–25 (LVYASILMMGALCLYFSM) threads the bilayer. Residues 26–308 (DSFRELPFVF…NSKEQDCPAV (283 aa)) are Lumenal-facing. N-linked (GlcNAc...) asparagine glycans are attached at residues Asn128, Asn172, and Asn229.

Belongs to the glycosyltransferase 31 family. As to expression, expressed in brain and kidney.

It localises to the golgi apparatus membrane. The enzyme catalyses a globoside Gb4Cer (d18:1(4E)) + UDP-alpha-D-galactose = a globoside GalGb4Cer (d18:1(4E)) + UDP + H(+). The protein operates within protein modification; protein glycosylation. Catalyzes the transfer of Gal to GlcNAc-based acceptors with a preference for the core3 O-linked glycan GlcNAc(beta1,3)GalNAc structure. Can use glycolipid LC3Cer as an efficient acceptor. Also catalyzes the transfer of Gal to the terminal GalNAc unit of the globoside GB4, thereby synthesizing the glycolipid GB5, also known as the stage-specific embryonic antigen-3 (SSEA-3). In Mus musculus (Mouse), this protein is Beta-1,3-galactosyltransferase 5.